The chain runs to 556 residues: Phosphomethylpyrimidine synthase (556 aa).

Residues Asn-191, Met-220, Tyr-249, His-285, 305 to 307 (SRG), 346 to 349 (DALR), and Glu-385 contribute to the substrate site. Residue His-389 participates in Zn(2+) binding. A substrate-binding site is contributed by Tyr-412. His-453 lines the Zn(2+) pocket. [4Fe-4S] cluster-binding residues include Cys-535, Cys-538, and Cys-543.

Belongs to the ThiC family. [4Fe-4S] cluster serves as cofactor.

The catalysed reaction is 5-amino-1-(5-phospho-beta-D-ribosyl)imidazole + S-adenosyl-L-methionine = 4-amino-2-methyl-5-(phosphooxymethyl)pyrimidine + CO + 5'-deoxyadenosine + formate + L-methionine + 3 H(+). The protein operates within cofactor biosynthesis; thiamine diphosphate biosynthesis. Its function is as follows. Catalyzes the synthesis of the hydroxymethylpyrimidine phosphate (HMP-P) moiety of thiamine from aminoimidazole ribotide (AIR) in a radical S-adenosyl-L-methionine (SAM)-dependent reaction. The chain is Phosphomethylpyrimidine synthase from Chlorobaculum tepidum (strain ATCC 49652 / DSM 12025 / NBRC 103806 / TLS) (Chlorobium tepidum).